The primary structure comprises 239 residues: Vesicle-associated protein 1-3 (239 aa).

The residue at position 1 (methionine 1) is an N-acetylmethionine. Position 2 is an N-acetylthreonine; in Vesicle-associated protein 1-3, N-terminally processed (threonine 2). Residues 2-215 (TTGDLVNIHP…RKETSKKQSG (214 aa)) are Cytoplasmic-facing. Residues 6–127 (LVNIHPTELK…EDFKLRVVYI (122 aa)) enclose the MSP domain. Residues serine 133 and serine 164 each carry the phosphoserine modification. Positions 179–214 (SMISKLTEEKTSATQQSQKLRLELEMLRKETSKKQS) form a coiled coil. Residues 216-236 (GHSLLLMLLVGLLGCVIGYLL) traverse the membrane as a helical; Anchor for type IV membrane protein segment.

It belongs to the VAMP-associated protein (VAP) (TC 9.B.17) family.

Its subcellular location is the endoplasmic reticulum membrane. Its function is as follows. May play a role in vesicle trafficking. This Arabidopsis thaliana (Mouse-ear cress) protein is Vesicle-associated protein 1-3 (PVA13).